The sequence spans 88 residues: Class II hydrophobin 1 (88 aa).

The signal sequence occupies residues 1 to 15 (MKFFIATIFATGALA). Cystine bridges form between C19–C69, C29–C59, C30–C42, and C70–C81.

This sequence belongs to the cerato-ulmin hydrophobin family. In terms of assembly, homodimer. Homodimers further self-assemble to form highly ordered films at water-air interfaces through intermolecular interactions.

It localises to the secreted. The protein resides in the cell wall. Functionally, aerial growth, conidiation, and dispersal of filamentous fungi in the environment rely upon a capability of their secreting small amphipathic proteins called hydrophobins (HPBs) with low sequence identity. Class I can self-assemble into an outermost layer of rodlet bundles on aerial cell surfaces, conferring cellular hydrophobicity that supports fungal growth, development and dispersal; whereas Class II form highly ordered films at water-air interfaces through intermolecular interactions but contribute nothing to the rodlet structure. The protein is Class II hydrophobin 1 of Trichoderma asperellum (strain ATCC 204424 / CBS 433.97 / NBRC 101777).